A 368-amino-acid chain; its full sequence is tRNA-specific 2-thiouridylase MnmA (368 aa).

Residues 11 to 18 (GMSGGVDS) and methionine 37 each bind ATP. Positions 97 to 99 (NPD) are interaction with target base in tRNA. The active-site Nucleophile is the cysteine 102. A disulfide bridge links cysteine 102 with cysteine 199. Glycine 127 lines the ATP pocket. The tract at residues 149 to 151 (KDQ) is interaction with tRNA. The active-site Cysteine persulfide intermediate is cysteine 199. The interaction with tRNA stretch occupies residues 311–312 (RY).

Belongs to the MnmA/TRMU family. In terms of assembly, interacts with TusE.

The protein resides in the cytoplasm. The enzyme catalyses S-sulfanyl-L-cysteinyl-[protein] + uridine(34) in tRNA + AH2 + ATP = 2-thiouridine(34) in tRNA + L-cysteinyl-[protein] + A + AMP + diphosphate + H(+). Its function is as follows. Catalyzes the 2-thiolation of uridine at the wobble position (U34) of tRNA(Lys), tRNA(Glu) and tRNA(Gln), leading to the formation of s(2)U34, the first step of tRNA-mnm(5)s(2)U34 synthesis. Sulfur is provided by IscS, via a sulfur-relay system. Binds ATP and its substrate tRNAs. In Klebsiella pneumoniae subsp. pneumoniae (strain ATCC 700721 / MGH 78578), this protein is tRNA-specific 2-thiouridylase MnmA.